Here is a 273-residue protein sequence, read N- to C-terminus: 4-hydroxy-tetrahydrodipicolinate reductase (273 aa).

NAD(+) is bound by residues 12–17 and glutamate 38; that span reads GAGGRM. Arginine 39 contacts NADP(+). NAD(+)-binding positions include 102–104 and 126–129; these read GTT and AANF. Histidine 159 functions as the Proton donor/acceptor in the catalytic mechanism. Histidine 160 contacts (S)-2,3,4,5-tetrahydrodipicolinate. Catalysis depends on lysine 163, which acts as the Proton donor. Position 169-170 (169-170) interacts with (S)-2,3,4,5-tetrahydrodipicolinate; the sequence is GT.

Belongs to the DapB family. As to quaternary structure, homotetramer.

It localises to the cytoplasm. The catalysed reaction is (S)-2,3,4,5-tetrahydrodipicolinate + NAD(+) + H2O = (2S,4S)-4-hydroxy-2,3,4,5-tetrahydrodipicolinate + NADH + H(+). It catalyses the reaction (S)-2,3,4,5-tetrahydrodipicolinate + NADP(+) + H2O = (2S,4S)-4-hydroxy-2,3,4,5-tetrahydrodipicolinate + NADPH + H(+). The protein operates within amino-acid biosynthesis; L-lysine biosynthesis via DAP pathway; (S)-tetrahydrodipicolinate from L-aspartate: step 4/4. Functionally, catalyzes the conversion of 4-hydroxy-tetrahydrodipicolinate (HTPA) to tetrahydrodipicolinate. This Shigella sonnei (strain Ss046) protein is 4-hydroxy-tetrahydrodipicolinate reductase.